The sequence spans 666 residues: Non-receptor tyrosine-protein kinase TNK1 (666 aa).

At serine 96 the chain carries Phosphoserine. Residues 116 to 383 (VRRGELLGSG…LEGLLQEAWL (268 aa)) enclose the Protein kinase domain. Residues 122-130 (LGSGCFGVV) and lysine 148 contribute to the ATP site. Catalysis depends on aspartate 245, which acts as the Proton acceptor. Serine 255 bears the Phosphoserine mark. Residues 381–441 (AWLSEGRCVR…PASAVTLADL (61 aa)) enclose the SH3 domain. The segment at 442 to 589 (GGSPVTHPAH…VPSGGPLSDP (148 aa)) is disordered. The segment covering 457-473 (HGEKCRGGTDGDREKAT) has biased composition (basic and acidic residues). At serine 498 the chain carries Phosphoserine. Position 510 is a phosphothreonine (threonine 510). Serine 515 carries the post-translational modification Phosphoserine. A compositionally biased stretch (pro residues) spans 531 to 544 (DLPPRPPDLPPRPP). A Phosphoserine modification is found at serine 582.

The protein belongs to the protein kinase superfamily. Tyr protein kinase family. Interacts with the SH3 domain of PLCG1 via its Pro-rich domain. Post-translationally, autophosphorylated on tyrosine residues. Expressed in whole embryo and all adult tissues examined including liver, kidney, heart, brain, skeletal muscle and intestine. Also detected in various myeloid- and lymphoid-derived cell lines.

Its subcellular location is the membrane. It is found in the cytoplasm. The enzyme catalyses L-tyrosyl-[protein] + ATP = O-phospho-L-tyrosyl-[protein] + ADP + H(+). May function in signaling pathways utilized broadly during fetal development and more selectively in adult tissues and in cells of the lymphohematopoietic system. Could specifically be involved in phospholipid signal transduction. Involved in negative regulation of cell growth. Has tumor suppressor properties. Plays a negative regulatory role in the Ras-MAPK pathway. The polypeptide is Non-receptor tyrosine-protein kinase TNK1 (Mus musculus (Mouse)).